The primary structure comprises 280 residues: Virginiamycin B lyase (280 aa).

His-215 contributes to the substrate binding site. Residue Glu-254 coordinates Mg(2+). His-256 acts as the Proton acceptor in catalysis. Glu-271 serves as a coordination point for Mg(2+).

Belongs to the Vgb family. In terms of assembly, monomer. The cofactor is Mg(2+).

In terms of biological role, inactivates the type B streptogramin antibiotics by linearizing the lactone ring at the ester linkage, generating a free phenylglycine carboxylate and converting the threonyl moiety into 2-amino-butenoic acid. This chain is Virginiamycin B lyase, found in Mycobacterium sp. (strain KMS).